The chain runs to 459 residues: Tryptophan synthase beta chain (459 aa).

At Lys-121 the chain carries N6-(pyridoxal phosphate)lysine.

Belongs to the TrpB family. In terms of assembly, tetramer of two alpha and two beta chains. Requires pyridoxal 5'-phosphate as cofactor.

It carries out the reaction (1S,2R)-1-C-(indol-3-yl)glycerol 3-phosphate + L-serine = D-glyceraldehyde 3-phosphate + L-tryptophan + H2O. It participates in amino-acid biosynthesis; L-tryptophan biosynthesis; L-tryptophan from chorismate: step 5/5. The beta subunit is responsible for the synthesis of L-tryptophan from indole and L-serine. This Pyrococcus horikoshii (strain ATCC 700860 / DSM 12428 / JCM 9974 / NBRC 100139 / OT-3) protein is Tryptophan synthase beta chain (trpB).